Consider the following 335-residue polypeptide: tRNA N6-adenosine threonylcarbamoyltransferase (335 aa).

2 residues coordinate Fe cation: His110 and His114. Residues 132 to 136, Asp165, Gly178, and Asn271 contribute to the substrate site; that span reads LVSGG. Asp299 lines the Fe cation pocket.

The protein belongs to the KAE1 / TsaD family. Requires Fe(2+) as cofactor.

The protein localises to the cytoplasm. It catalyses the reaction L-threonylcarbamoyladenylate + adenosine(37) in tRNA = N(6)-L-threonylcarbamoyladenosine(37) in tRNA + AMP + H(+). Functionally, required for the formation of a threonylcarbamoyl group on adenosine at position 37 (t(6)A37) in tRNAs that read codons beginning with adenine. Is involved in the transfer of the threonylcarbamoyl moiety of threonylcarbamoyl-AMP (TC-AMP) to the N6 group of A37, together with TsaE and TsaB. TsaD likely plays a direct catalytic role in this reaction. This is tRNA N6-adenosine threonylcarbamoyltransferase from Campylobacter jejuni subsp. jejuni serotype O:2 (strain ATCC 700819 / NCTC 11168).